The following is a 383-amino-acid chain: Transposase InsI for insertion sequence element IS30C (383 aa).

In terms of domain architecture, Integrase catalytic spans 213-379 (VNGTPIHERS…TPKEIIERGV (167 aa)).

This sequence belongs to the transposase IS30 family.

Required for the transposition of the insertion element. The protein is Transposase InsI for insertion sequence element IS30C (insI3) of Escherichia coli (strain K12).